Consider the following 371-residue polypeptide: Otolith matrix protein 1 (371 aa).

The N-terminal stretch at M1 to S21 is a signal peptide. The Transferrin-like domain occupies I27–C367.

As to quaternary structure, interacts with OTOL1.

It is found in the secreted. Functionally, required for normal otolith growth and deposition of otolin-1 in the otolith. This Danio rerio (Zebrafish) protein is Otolith matrix protein 1 (otomp).